A 246-amino-acid polypeptide reads, in one-letter code: MRISILTIFPEMVEIVKKYGVISRAIKNGILEIEIFNLRDFTNDKHKTVDDYPFGGGPGMVMKPEPFFNFFEYYKERYGNTYTILTSPQGDRLTNHLVKELSEKESILIICGRYEGIDERVTKFVDREISIGDYVLTGGELPAMVIVDAVSRFIPDVIDKKSVEQETFNTGLLDHPHYTRPRNYKGLEVPEVLLSGDHKKIEIWRRKMALKKTMLKRPDLFLNKDLDGVDKVALLDLFRELINNAK.

S-adenosyl-L-methionine contacts are provided by residues Gly-112 and 131-136; that span reads IGDYVL.

It belongs to the RNA methyltransferase TrmD family. As to quaternary structure, homodimer.

It is found in the cytoplasm. It catalyses the reaction guanosine(37) in tRNA + S-adenosyl-L-methionine = N(1)-methylguanosine(37) in tRNA + S-adenosyl-L-homocysteine + H(+). Its function is as follows. Specifically methylates guanosine-37 in various tRNAs. The protein is tRNA (guanine-N(1)-)-methyltransferase of Thermosipho melanesiensis (strain DSM 12029 / CIP 104789 / BI429).